A 966-amino-acid polypeptide reads, in one-letter code: Calsyntenin-2 (966 aa).

The signal sequence occupies residues 1–20 (MLPGRLCLVPLLLALGVGSG). The Extracellular segment spans residues 21–835 (GGSGDGGDSR…SIQRSSVVPS (815 aa)). 2 Cadherin domains span residues 46 to 162 (IETS…APTF) and 163 to 282 (KEPA…MPLF). Residues Asn-58 and Asn-100 are each glycosylated (N-linked (GlcNAc...) asparagine). Residues Asn-344, Asn-376, Asn-720, and Asn-733 are each glycosylated (N-linked (GlcNAc...) asparagine). The chain crosses the membrane as a helical span at residues 836–856 (IATVVIIISVCMLVFVVAMGV). Residues 857–966 (YRVRIAHQHF…NTAGVINIWK (110 aa)) are Cytoplasmic-facing. The tract at residues 890–966 (NPMEKHEGPG…NTAGVINIWK (77 aa)) is disordered. Over residues 901–916 (GEDETTEVEEEEEAEE) the composition is skewed to acidic residues. The span at 943 to 960 (QSGTSSQSPERSTWNTAG) shows a compositional bias: polar residues.

The protein belongs to the calsyntenin family. In terms of processing, proteolytically processed under normal cellular conditions. A primary zeta-cleavage generates a large extracellular (soluble) N-terminal domain (sAlc) and a short C-terminal transmembrane fragment (CTF1). A secondary cleavage catalyzed by gamma-secretase within the transmembrane domain releases the beta-Alc-gamma chain in the extracellular milieu and produces an intracellular fragment (AlcICD). This processing is strongly suppressed in the tripartite complex formed with APBA2 and APP, which seems to prevent the association with PSEN1. In terms of tissue distribution, restricted to the brain. In the cerebral cortex, found in the somas and neuropil of all layers. Expressed at highest levels in neurons of cortical layers 5 and 6 and, at lower levels, in neurons of the upper layers. Highly expressed in Purkinje cells. Also found in a few scattered interneurons throughout the granule cell layer and occasionally in neurons in the molecular layer (at protein level). Present throughout all cortical layers, highest levels in GABAergic neurons (based on morphology and distribution pattern).

The protein resides in the postsynaptic cell membrane. The protein localises to the endoplasmic reticulum membrane. It localises to the golgi apparatus membrane. Its subcellular location is the cell projection. It is found in the dendrite. Its function is as follows. Postsynaptic adhesion molecule that binds to presynaptic neurexins to mediate synapse formation, and which is involved in learning and memory. Promotes synapse development by acting as a cell adhesion molecule at the postsynaptic membrane, which associates with neurexin-alpha at the presynaptic membrane. This is Calsyntenin-2 from Mus musculus (Mouse).